The chain runs to 132 residues: UPF0292 protein PH1700 (132 aa).

Residues 20–100 (EGAIIVEGAR…KVDTETRREL (81 aa)) enclose the Toprim domain. Glu26, Asp69, and Asp71 together coordinate Mg(2+).

It belongs to the UPF0292 family. Mg(2+) is required as a cofactor.

The sequence is that of UPF0292 protein PH1700 from Pyrococcus horikoshii (strain ATCC 700860 / DSM 12428 / JCM 9974 / NBRC 100139 / OT-3).